The primary structure comprises 336 residues: Serpentine receptor class gamma-9 (336 aa).

7 helical membrane passes run 30–50, 64–84, 111–131, 152–172, 200–220, 237–257, and 271–291; these read LLQA…LYVI, FVIY…DIFI, IYYP…IFLT, LSFI…NTII, FLFL…VIMF, LCLA…FEAL, and FLIQ…IMIF.

The protein belongs to the nematode receptor-like protein srg family.

The protein resides in the membrane. In Caenorhabditis elegans, this protein is Serpentine receptor class gamma-9 (srg-9).